A 123-amino-acid chain; its full sequence is Small ribosomal subunit protein uS12 (123 aa).

At Asp89 the chain carries 3-methylthioaspartic acid. Residues 101-123 (SLDTSGVKDRKQGRSKYGAKRPK) are disordered. A compositionally biased stretch (basic residues) spans 113–123 (GRSKYGAKRPK).

This sequence belongs to the universal ribosomal protein uS12 family. In terms of assembly, part of the 30S ribosomal subunit. Contacts proteins S8 and S17. May interact with IF1 in the 30S initiation complex.

Its function is as follows. With S4 and S5 plays an important role in translational accuracy. In terms of biological role, interacts with and stabilizes bases of the 16S rRNA that are involved in tRNA selection in the A site and with the mRNA backbone. Located at the interface of the 30S and 50S subunits, it traverses the body of the 30S subunit contacting proteins on the other side and probably holding the rRNA structure together. The combined cluster of proteins S8, S12 and S17 appears to hold together the shoulder and platform of the 30S subunit. In Stutzerimonas stutzeri (strain A1501) (Pseudomonas stutzeri), this protein is Small ribosomal subunit protein uS12.